We begin with the raw amino-acid sequence, 746 residues long: Ferrienterobactin receptor (746 aa).

A signal peptide spans 1–22; it reads MNKKIHSLALLVNLGIYGVAQA. The TonB box motif lies at 34–41; that stretch reads DTIVVTAA. Residues 42 to 169 enclose the TBDR plug domain; sequence EQNLQAPGVS…AGGVVNIITK (128 aa). Positions 76 to 96 are disordered; it reads GVNLTGNSTSGQRGNNRQIDI. The segment covering 79–93 has biased composition (polar residues); the sequence is LTGNSTSGQRGNNRQ. Residues 174–746 enclose the TBDR beta-barrel domain; that stretch reads EWHGSWDAYF…TWYMSVNTHF (573 aa). The short motif at 729-746 is the TonB C-terminal box element; sequence YTYNEPGRTWYMSVNTHF.

Belongs to the TonB-dependent receptor family.

It is found in the cell outer membrane. Functionally, this protein is involved in the initial step of iron uptake by binding ferrienterobactin (Fe-ENT), an iron chelatin siderophore that allows E.coli to extract iron from the environment. FepA also acts as a receptor for colicins B and D. The polypeptide is Ferrienterobactin receptor (fepA) (Escherichia coli (strain K12)).